The chain runs to 170 residues: MORN repeat-containing protein 5 (170 aa).

MORN repeat units lie at residues 8–30 (YFGE…TDTR), 31–53 (YIGE…SGSR), and 54–75 (FDAI…DGLQ).

As to expression, only detected in testis (at protein level).

It is found in the cell projection. The protein resides in the cilium. Its subcellular location is the flagellum. In Mus musculus (Mouse), this protein is MORN repeat-containing protein 5 (Morn5).